The sequence spans 144 residues: Large ribosomal subunit protein uL15 (144 aa).

The segment at 1–44 is disordered; that stretch reads MKLNELMPSEGSRTNRKRIGRGTSSGTGKTAGRGQKGQKARGKV. Positions 23–35 are enriched in gly residues; sequence TSSGTGKTAGRGQ.

It belongs to the universal ribosomal protein uL15 family. As to quaternary structure, part of the 50S ribosomal subunit.

Functionally, binds to the 23S rRNA. The chain is Large ribosomal subunit protein uL15 from Pediococcus pentosaceus (strain ATCC 25745 / CCUG 21536 / LMG 10740 / 183-1w).